Reading from the N-terminus, the 391-residue chain is 3-ketoacyl-CoA thiolase (391 aa).

Cys95 (acyl-thioester intermediate) is an active-site residue. Active-site proton acceptor residues include His347 and Cys377.

Belongs to the thiolase-like superfamily. Thiolase family. In terms of assembly, heterotetramer of two alpha chains (FadB) and two beta chains (FadA).

It localises to the cytoplasm. The catalysed reaction is an acyl-CoA + acetyl-CoA = a 3-oxoacyl-CoA + CoA. The protein operates within lipid metabolism; fatty acid beta-oxidation. Its function is as follows. Catalyzes the final step of fatty acid oxidation in which acetyl-CoA is released and the CoA ester of a fatty acid two carbons shorter is formed. The protein is 3-ketoacyl-CoA thiolase of Pseudomonas aeruginosa (strain ATCC 15692 / DSM 22644 / CIP 104116 / JCM 14847 / LMG 12228 / 1C / PRS 101 / PAO1).